A 552-amino-acid chain; its full sequence is C-type lectin receptor-like tyrosine-protein kinase At1g52310 (552 aa).

Positions 1 to 27 (MELKWVSCRKQSLFLISCLALLCLASL) are cleaved as a signal peptide. The Extracellular portion of the chain corresponds to 28–201 (DTISCESTQN…DIKCRNCHKY (174 aa)). N-linked (GlcNAc...) asparagine glycosylation is found at Asn-37, Asn-59, Asn-69, Asn-106, Asn-118, Asn-137, Asn-154, Asn-169, and Asn-180. In terms of domain architecture, C-type lectin spans 59–188 (NQTKCYAYFK…CNASHAFVCA (130 aa)). Cystine bridges form between Cys-80-Cys-187 and Cys-164-Cys-179. The chain crosses the membrane as a helical span at residues 202-222 (LVILAVVSGLILFTTFAIILW). Residues 223–552 (LLVYKRSKKR…QQLVQPLEVK (330 aa)) are Cytoplasmic-facing. The Protein kinase domain occupies 268 to 546 (SEANRLAGDA…HVVHQLQQLV (279 aa)). ATP is bound by residues 274–282 (AGDAKTGGT) and Lys-296. Asp-394 acts as the Proton acceptor in catalysis.

The protein belongs to the protein kinase superfamily. Tyr protein kinase family.

It localises to the cell membrane. The catalysed reaction is L-tyrosyl-[protein] + ATP = O-phospho-L-tyrosyl-[protein] + ADP + H(+). This is C-type lectin receptor-like tyrosine-protein kinase At1g52310 from Arabidopsis thaliana (Mouse-ear cress).